Here is a 149-residue protein sequence, read N- to C-terminus: Thioredoxin-like protein 4B (149 aa).

The protein belongs to the DIM1 family. As to quaternary structure, homodimer. Interacts with the U5-102 kDa protein subunit of the spliceosome.

It is found in the nucleus. Essential role in pre-mRNA splicing. Required in cell cycle progression for S/G(2) transition. The chain is Thioredoxin-like protein 4B (Txnl4b) from Mus musculus (Mouse).